The chain runs to 344 residues: Arginine N-succinyltransferase (344 aa).

Residue L125 coordinates succinyl-CoA. Residue H229 is the Proton donor of the active site.

It belongs to the arginine N-succinyltransferase family.

The enzyme catalyses succinyl-CoA + L-arginine = N(2)-succinyl-L-arginine + CoA + H(+). It participates in amino-acid degradation; L-arginine degradation via AST pathway; L-glutamate and succinate from L-arginine: step 1/5. Functionally, catalyzes the transfer of succinyl-CoA to arginine to produce N(2)-succinylarginine. This chain is Arginine N-succinyltransferase, found in Escherichia coli (strain UTI89 / UPEC).